The primary structure comprises 141 residues: HTH-type transcriptional repressor NsrR (141 aa).

The HTH rrf2-type domain maps to 2–129; sequence QLTSFTDYGL…DNYTLADLVE (128 aa). A DNA-binding region (H-T-H motif) is located at residues 28-51; the sequence is ISEVTEVYGVSRNHMVKIINQLSR. Cys91, Cys96, and Cys102 together coordinate [2Fe-2S] cluster.

The cofactor is [2Fe-2S] cluster.

Functionally, nitric oxide-sensitive repressor of genes involved in protecting the cell against nitrosative stress. May require iron for activity. The sequence is that of HTH-type transcriptional repressor NsrR from Klebsiella pneumoniae subsp. pneumoniae (strain ATCC 700721 / MGH 78578).